The chain runs to 449 residues: Elongation factor 1-alpha C (449 aa).

The tr-type G domain occupies 5-234 (KQHVSIVVIG…DACDPPKRPV (230 aa)). A G1 region spans residues 14–21 (GHVDSGKS). GTP is bound at residue 14–21 (GHVDSGKS). Residue lysine 55 is modified to N6,N6-dimethyllysine. The tract at residues 70-74 (GITID) is G2. Lysine 79 is subject to N6,N6,N6-trimethyllysine. The segment at 91–94 (DAPG) is G3. GTP-binding positions include 91–95 (DAPGH) and 153–156 (NKMD). A G4 region spans residues 153-156 (NKMD). Lysine 187 is subject to N6,N6,N6-trimethyllysine. Positions 194–196 (SGW) are G5. Lysine 265 carries the post-translational modification N6-methyllysine. N6,N6,N6-trimethyllysine is present on residues lysine 310 and lysine 400.

It belongs to the TRAFAC class translation factor GTPase superfamily. Classic translation factor GTPase family. EF-Tu/EF-1A subfamily.

It localises to the cytoplasm. Its function is as follows. This protein promotes the GTP-dependent binding of aminoacyl-tRNA to the A-site of ribosomes during protein biosynthesis. In Porphyra purpurea (Red seaweed), this protein is Elongation factor 1-alpha C (TEF-C).